The chain runs to 619 residues: Coagulation factor X-activating enzyme heavy chain (619 aa).

A signal peptide spans 1–20 (MMQVLLVTISLAVFPYQGSS). Residues 21-188 (IILESGNVND…SDKPIKKASQ (168 aa)) constitute a propeptide that is removed on maturation. One can recognise a Peptidase M12B domain in the interval 199–393 (IFIELVIIVD…YKPKCIFNPP (195 aa)). The cysteines at positions 215 and 251 are disulfide-linked. N-linked (GlcNAc...) (complex) asparagine glycosylation is found at Asn-216 and Asn-257. Cystine bridges form between Cys-308–Cys-388, Cys-348–Cys-372, and Cys-350–Cys-355. His-333 serves as a coordination point for Zn(2+). Glu-334 is a catalytic residue. Zn(2+) is bound by residues His-337 and His-343. N-linked (GlcNAc...) (complex) asparagine glycosylation is found at Asn-351 and Asn-371. The region spanning 401–487 (PPVCGNEIWE…ECPRDQLQQN (87 aa)) is the Disintegrin domain. Residues Val-403, Asn-406, Ile-408, Glu-410, Glu-413, and Asp-416 each contribute to the Ca(2+) site. 14 disulfide bridges follow: Cys-404–Cys-433, Cys-415–Cys-428, Cys-417–Cys-423, Cys-427–Cys-450, Cys-441–Cys-447, Cys-446–Cys-472, Cys-459–Cys-479, Cys-466–Cys-498, Cys-491–Cys-503, Cys-510–Cys-560, Cys-525–Cys-571, Cys-538–Cys-548, Cys-555–Cys-597, and Cys-591–Cys-603. The short motif at 465 to 467 (ECD) is the D/ECD-tripeptide element. Residues Asp-467, Val-468, Glu-470, Asp-482, and Gln-483 each contribute to the Ca(2+) site.

The protein belongs to the venom metalloproteinase (M12B) family. P-III subfamily. P-IIId sub-subfamily. Heterotrimer; disulfide-linked. The heterotrimer consists of 1 heavy chain and 2 light chains (lectins): LC1 and LC2. Zn(2+) serves as cofactor. N-glycosylated; probably required for conformation. Removal of easily accessible sugars does not change its functional capacity, but removal of the core sugars with N-glycanase causes a virtually complete loss of enzyme activity, apparently as a result of major conformational changes in the molecule. Not O-glycosylated. In terms of tissue distribution, expressed by the venom gland.

The protein localises to the secreted. The enzyme catalyses Specifically activates several components of the blood clotting system, including coagulation factor X, coagulation factor IX and protein C by cleavage of Arg-|-Xaa bonds. Has no action on insulin B chain.. In terms of biological role, catalytic subunit of blood coagulation factor X-activating enzyme. Activates coagulation factor X (F10) by cleaving the Arg-Ile bond and is also able to activate coagulation factor IX (F9) and protein S (PROS1) by specific cleavage of Arg-Ile and Arg-Val bonds. The protein is Coagulation factor X-activating enzyme heavy chain of Daboia siamensis (Eastern Russel's viper).